The sequence spans 162 residues: Podoplanin (162 aa).

The signal sequence occupies residues 1–22; it reads MWKVSALLFVLGSASLWVLAEG. Residues 23–57 form a disordered region; it reads ASTGQPEDDTETTGLEGGVAMPGAEDDVVTPGTSE. Topologically, residues 23-131 are extracellular; that stretch reads ASTGQPEDDT…EKDGLSTVTL (109 aa). Residues threonine 25, threonine 32, threonine 34, threonine 35, threonine 52, threonine 55, threonine 65, threonine 66, threonine 76, and threonine 85 are each glycosylated (O-linked (GalNAc...) threonine). Residues 85–108 are compositionally biased toward polar residues; sequence TSESTVHAQEQSPSATASNVATSH. The tract at residues 85 to 119 is disordered; that stretch reads TSESTVHAQEQSPSATASNVATSHSTEKVDGDTQT. Serine 86 and serine 88 each carry an O-linked (GalNAc...) serine glycan. The O-linked (GalNAc...) threonine glycan is linked to threonine 89. O-linked (GalNAc...) serine glycosylation is found at serine 96 and serine 98. Threonine 100 carries an O-linked (GalNAc...) threonine glycan. O-linked (GalNAc...) serine glycosylation is present at serine 102. Threonine 106 carries O-linked (GalNAc...) threonine glycosylation. O-linked (GalNAc...) serine glycosylation is found at serine 107 and serine 109. The segment covering 109-119 has biased composition (basic and acidic residues); the sequence is STEKVDGDTQT. Threonine 110, threonine 117, threonine 119, and threonine 120 each carry an O-linked (GalNAc...) threonine glycan. The helical transmembrane segment at 132–152 threads the bilayer; sequence VGIIVGVLLAIGFIGAIIVVV. Residues 133-137 form a requires for dimerization and lipid rafts association region; the sequence is GIIVG. The Cytoplasmic segment spans residues 153-162; the sequence is MRKMSGRYSP. Residues 154-155 form a requires for interaction with MSN and EZR region; sequence RK.

The protein belongs to the podoplanin family. Homodimer. Interacts with CLEC1B; the interaction is independent of CLEC1B glycosylation and activates CLEC1B; the interaction is dependent of sialic acid on O-glycans. Interacts with CD9; this interaction is homophilic and attenuates platelet aggregation and pulmonary metastasis induced by PDPN. Interacts with LGALS8; the interaction is glycosylation-dependent; may participate in connection of the lymphatic endothelium to the surrounding extracellular matrix. Interacts with HSPA9. Interacts (via extracellular domain) with CD44; this interaction is required for PDPN-mediated directional migration and regulation of lamellipodia extension/stabilization during cell spreading and migration. Interacts (via cytoplasmic domain) with MSN and EZR; activates RHOA and promotes epithelial-mesenchymal transition. Interacts with CCL21; relocalized PDPN to the basolateral membrane. In terms of processing, extensively O-glycosylated. Contains sialic acid residues. O-glycosylation is necessary for platelet aggregation activity. Disialylated at Thr-52; sialic acid is critical for platelet-aggregating activity and for CLEC1B interaction. The N-terminus is blocked. Post-translationally, cleaved by a metalloprotease within its extracellular (EC) domain, generating a membrane-bound C-terminal fragment (PCTF33) and an extracellular fragment. The resulting membrane-bound C-terminal fragment (PCTF33) is further processed between Val-150 and Val-151 by PSEN1/gamma-secretase generating the intracellular domain of podoplanin (PICD). As to expression, highly expressed in placenta, lung, skeletal muscle and brain. Weakly expressed in brain, kidney and liver. In placenta, expressed on the apical plasma membrane of endothelium. In lung, expressed in alveolar epithelium. Up-regulated in colorectal tumors and expressed in 25% of early oral squamous cell carcinomas.

It localises to the membrane. Its subcellular location is the cell projection. The protein resides in the lamellipodium membrane. It is found in the filopodium membrane. The protein localises to the microvillus membrane. It localises to the ruffle membrane. Its subcellular location is the membrane raft. The protein resides in the apical cell membrane. It is found in the basolateral cell membrane. The protein localises to the invadopodium. It localises to the cytoplasm. Its subcellular location is the cytosol. In terms of biological role, mediates effects on cell migration and adhesion through its different partners. During development plays a role in blood and lymphatic vessels separation by binding CLEC1B, triggering CLEC1B activation in platelets and leading to platelet activation and/or aggregation. Interaction with CD9, on the contrary, attenuates platelet aggregation induced by PDPN. Through MSN or EZR interaction promotes epithelial-mesenchymal transition (EMT) leading to ERZ phosphorylation and triggering RHOA activation leading to cell migration increase and invasiveness. Interaction with CD44 promotes directional cell migration in epithelial and tumor cells. In lymph nodes (LNs), controls fibroblastic reticular cells (FRCs) adhesion to the extracellular matrix (ECM) and contraction of the actomyosin by maintaining ERM proteins (EZR; MSN and RDX) and MYL9 activation through association with unknown transmembrane proteins. Engagement of CLEC1B by PDPN promotes FRCs relaxation by blocking lateral membrane interactions leading to reduction of ERM proteins (EZR; MSN and RDX) and MYL9 activation. Through binding with LGALS8 may participate in connection of the lymphatic endothelium to the surrounding extracellular matrix. In keratinocytes, induces changes in cell morphology showing an elongated shape, numerous membrane protrusions, major reorganization of the actin cytoskeleton, increased motility and decreased cell adhesion. Controls invadopodia stability and maturation leading to efficient degradation of the extracellular matrix (ECM) in tumor cells through modulation of RHOC activity in order to activate ROCK1/ROCK2 and LIMK1/LIMK2 and inactivation of CFL1. Required for normal lung cell proliferation and alveolus formation at birth. Does not function as a water channel or as a regulator of aquaporin-type water channels. Does not have any effect on folic acid or amino acid transport. The polypeptide is Podoplanin (Homo sapiens (Human)).